We begin with the raw amino-acid sequence, 318 residues long: Methionyl-tRNA formyltransferase (318 aa).

110-113 (SLLP) serves as a coordination point for (6S)-5,6,7,8-tetrahydrofolate.

The protein belongs to the Fmt family.

It carries out the reaction L-methionyl-tRNA(fMet) + (6R)-10-formyltetrahydrofolate = N-formyl-L-methionyl-tRNA(fMet) + (6S)-5,6,7,8-tetrahydrofolate + H(+). Attaches a formyl group to the free amino group of methionyl-tRNA(fMet). The formyl group appears to play a dual role in the initiator identity of N-formylmethionyl-tRNA by promoting its recognition by IF2 and preventing the misappropriation of this tRNA by the elongation apparatus. This Ligilactobacillus salivarius (strain UCC118) (Lactobacillus salivarius) protein is Methionyl-tRNA formyltransferase.